The chain runs to 86 residues: MVVIRLSRAGAKKRPFYHMVVTDSRKRRDGNYIERIGYFNPVARGQEVKLHIDMDKMTHWQKVGAQLSDRVSALLKEHSKKSETAA.

It belongs to the bacterial ribosomal protein bS16 family.

This chain is Small ribosomal subunit protein bS16, found in Legionella pneumophila (strain Paris).